Reading from the N-terminus, the 130-residue chain is Small ribosomal subunit protein uS9 (130 aa).

It belongs to the universal ribosomal protein uS9 family.

The polypeptide is Small ribosomal subunit protein uS9 (Aeromonas hydrophila subsp. hydrophila (strain ATCC 7966 / DSM 30187 / BCRC 13018 / CCUG 14551 / JCM 1027 / KCTC 2358 / NCIMB 9240 / NCTC 8049)).